Consider the following 72-residue polypeptide: MAKEDTLEFPGVVKELLPNATFRVELENGHEIIAHTAGKMRKNRIRVLAGDKVQVEMTPYDLTKGRINYRFK.

Positions 1-72 constitute an S1-like domain; sequence MAKEDTLEFP…TKGRINYRFK (72 aa).

This sequence belongs to the IF-1 family. As to quaternary structure, component of the 30S ribosomal translation pre-initiation complex which assembles on the 30S ribosome in the order IF-2 and IF-3, IF-1 and N-formylmethionyl-tRNA(fMet); mRNA recruitment can occur at any time during PIC assembly.

It is found in the cytoplasm. Its function is as follows. One of the essential components for the initiation of protein synthesis. Stabilizes the binding of IF-2 and IF-3 on the 30S subunit to which N-formylmethionyl-tRNA(fMet) subsequently binds. Helps modulate mRNA selection, yielding the 30S pre-initiation complex (PIC). Upon addition of the 50S ribosomal subunit IF-1, IF-2 and IF-3 are released leaving the mature 70S translation initiation complex. This is Translation initiation factor IF-1 from Roseobacter denitrificans (strain ATCC 33942 / OCh 114) (Erythrobacter sp. (strain OCh 114)).